Here is a 391-residue protein sequence, read N- to C-terminus: S-adenosylmethionine synthase (391 aa).

The tract at residues 1 to 20 (MPRSDYLFTSESVSEGHPDK) is disordered. Residue histidine 17 participates in ATP binding. Aspartate 19 lines the Mg(2+) pocket. Glutamate 45 is a binding site for K(+). L-methionine is bound by residues glutamate 58 and glutamine 102. Residues 102–112 (QSADIAQGVDA) are flexible loop. ATP contacts are provided by residues 169–171 (DAK), 235–236 (KF), aspartate 244, 250–251 (RK), alanine 267, and lysine 271. Residue aspartate 244 coordinates L-methionine. Lysine 275 serves as a coordination point for L-methionine.

It belongs to the AdoMet synthase family. Homotetramer; dimer of dimers. Mg(2+) serves as cofactor. The cofactor is K(+).

Its subcellular location is the cytoplasm. The catalysed reaction is L-methionine + ATP + H2O = S-adenosyl-L-methionine + phosphate + diphosphate. It functions in the pathway amino-acid biosynthesis; S-adenosyl-L-methionine biosynthesis; S-adenosyl-L-methionine from L-methionine: step 1/1. Catalyzes the formation of S-adenosylmethionine (AdoMet) from methionine and ATP. The overall synthetic reaction is composed of two sequential steps, AdoMet formation and the subsequent tripolyphosphate hydrolysis which occurs prior to release of AdoMet from the enzyme. This Methylorubrum populi (strain ATCC BAA-705 / NCIMB 13946 / BJ001) (Methylobacterium populi) protein is S-adenosylmethionine synthase.